The sequence spans 646 residues: Peptidylprolyl isomerase domain and WD repeat-containing protein 1 (646 aa).

Residues 1-30 are disordered; the sequence is MAAESGSDFQQRRRRRRDPEEPEKTELSER. Position 2 is an N-acetylalanine (A2). A compositionally biased stretch (basic and acidic residues) spans 17-30; the sequence is RDPEEPEKTELSER. WD repeat units lie at residues 88–126, 131–170, 221–260, and 278–319; these read MHRDVITHVVCTKTDFIITASHDGHVKFWKKIEEGIEFV, SHLGVIECIAVSSEGALFCSVGDDKAMKVFDVVNFDMINM, LHTSPLTQIRLNPVYKAVVSSDKSGMIEYWTGPPHEYKFP, and KCKA…RVFD. Basic and acidic residues predominate over residues 455 to 478; it reads EPEDTKSADSDRDVFNEKPSKEEV. Positions 455 to 490 are disordered; the sequence is EPEDTKSADSDRDVFNEKPSKEEVMAATQAEGPKRV. Positions 490 to 645 constitute a PPIase cyclophilin-type domain; sequence VSDSAIIHTS…EDVSIINITV (156 aa).

This sequence belongs to the cyclophilin-type PPIase family. PPIL1 subfamily. Identified in the spliceosome C complex.

Its subcellular location is the nucleus. The enzyme catalyses [protein]-peptidylproline (omega=180) = [protein]-peptidylproline (omega=0). Inhibited by cyclosporin A (CsA). In terms of biological role, PPIase that catalyzes the cis-trans isomerization of proline imidic peptide bonds in oligopeptides and may therefore assist protein folding. May be involved in pre-mRNA splicing. The sequence is that of Peptidylprolyl isomerase domain and WD repeat-containing protein 1 from Pongo abelii (Sumatran orangutan).